Consider the following 208-residue polypeptide: Uracil phosphoribosyltransferase (208 aa).

5-phospho-alpha-D-ribose 1-diphosphate is bound by residues arginine 78, arginine 103, and 130–138; that span reads DPMLATGGS. Uracil is bound by residues isoleucine 193 and 198 to 200; that span reads GDA. Residue aspartate 199 coordinates 5-phospho-alpha-D-ribose 1-diphosphate.

The protein belongs to the UPRTase family. Requires Mg(2+) as cofactor.

The catalysed reaction is UMP + diphosphate = 5-phospho-alpha-D-ribose 1-diphosphate + uracil. It functions in the pathway pyrimidine metabolism; UMP biosynthesis via salvage pathway; UMP from uracil: step 1/1. Its activity is regulated as follows. Allosterically activated by GTP. In terms of biological role, catalyzes the conversion of uracil and 5-phospho-alpha-D-ribose 1-diphosphate (PRPP) to UMP and diphosphate. This is Uracil phosphoribosyltransferase from Pectobacterium atrosepticum (strain SCRI 1043 / ATCC BAA-672) (Erwinia carotovora subsp. atroseptica).